A 427-amino-acid chain; its full sequence is Trigger factor (427 aa).

The 86-residue stretch at 163–248 folds into the PPIase FKBP-type domain; the sequence is GDTVVIDFVG…IHEVKTKEVP (86 aa).

The protein belongs to the FKBP-type PPIase family. Tig subfamily.

It is found in the cytoplasm. It catalyses the reaction [protein]-peptidylproline (omega=180) = [protein]-peptidylproline (omega=0). Functionally, involved in protein export. Acts as a chaperone by maintaining the newly synthesized protein in an open conformation. Functions as a peptidyl-prolyl cis-trans isomerase. In Streptococcus pyogenes serotype M18 (strain MGAS8232), this protein is Trigger factor.